The primary structure comprises 29 residues: uncharacterized protein (29 aa).

The helical transmembrane segment at 8–28 (FALIVVLFILLIIVGTAFVGG) threads the bilayer.

It belongs to the SscA family.

Its subcellular location is the membrane. This is an uncharacterized protein from Bacillus subtilis (strain 168).